The following is a 194-amino-acid chain: tRNA (pseudouridine(54)-N(1))-methyltransferase (194 aa).

L125 provides a ligand contact to S-adenosyl-L-methionine.

This sequence belongs to the methyltransferase superfamily. TrmY family. Homodimer.

It localises to the cytoplasm. The catalysed reaction is pseudouridine(54) in tRNA + S-adenosyl-L-methionine = N(1)-methylpseudouridine(54) in tRNA + S-adenosyl-L-homocysteine + H(+). Functionally, specifically catalyzes the N1-methylation of pseudouridine at position 54 (Psi54) in tRNAs. This chain is tRNA (pseudouridine(54)-N(1))-methyltransferase, found in Methanospirillum hungatei JF-1 (strain ATCC 27890 / DSM 864 / NBRC 100397 / JF-1).